Consider the following 538-residue polypeptide: Carboxypeptidase 2 (538 aa).

Positions 1–21 (MVAYRFLTLISLGLGSHCASA) are cleaved as a signal peptide. N-linked (GlcNAc...) asparagine glycosylation is present at Asn46. Residues 53–76 (PAFTSPGTVPRGFSDGTSGPTRDE) form a disordered region. The 281-residue stretch at 71–351 (GPTRDETMEG…VMVKSILQTA (281 aa)) folds into the Peptidase M14 domain. Zn(2+)-binding residues include His136, Glu139, and His224. Glu322 serves as the catalytic Proton donor/acceptor. Residues Asn393 and Asn459 are each glycosylated (N-linked (GlcNAc...) asparagine).

It belongs to the peptidase M14 family. Requires Zn(2+) as cofactor.

Its subcellular location is the secreted. Extracellular metalloprotease that contributes to pathogenicity. The sequence is that of Carboxypeptidase 2 (MCPB) from Trichophyton tonsurans (Scalp ringworm fungus).